A 494-amino-acid chain; its full sequence is Ketol-acid reductoisomerase (NADP(+)) (494 aa).

Residues 14-208 (LDQLGRCRFM…GGHRAGCLES (195 aa)) form the KARI N-terminal Rossmann domain. Residues 45-48 (CGAQ), R68, R76, S78, and 108-110 (DKQ) each bind NADP(+). The active site involves H132. G158 provides a ligand contact to NADP(+). 2 consecutive KARI C-terminal knotted domains span residues 209-344 (SFVA…NYPA) and 345-487 (SDVE…MSDM). D217, E221, E389, and E393 together coordinate Mg(2+). S414 serves as a coordination point for substrate.

This sequence belongs to the ketol-acid reductoisomerase family. The cofactor is Mg(2+).

The catalysed reaction is (2R)-2,3-dihydroxy-3-methylbutanoate + NADP(+) = (2S)-2-acetolactate + NADPH + H(+). It catalyses the reaction (2R,3R)-2,3-dihydroxy-3-methylpentanoate + NADP(+) = (S)-2-ethyl-2-hydroxy-3-oxobutanoate + NADPH + H(+). Its pathway is amino-acid biosynthesis; L-isoleucine biosynthesis; L-isoleucine from 2-oxobutanoate: step 2/4. The protein operates within amino-acid biosynthesis; L-valine biosynthesis; L-valine from pyruvate: step 2/4. Involved in the biosynthesis of branched-chain amino acids (BCAA). Catalyzes an alkyl-migration followed by a ketol-acid reduction of (S)-2-acetolactate (S2AL) to yield (R)-2,3-dihydroxy-isovalerate. In the isomerase reaction, S2AL is rearranged via a Mg-dependent methyl migration to produce 3-hydroxy-3-methyl-2-ketobutyrate (HMKB). In the reductase reaction, this 2-ketoacid undergoes a metal-dependent reduction by NADPH to yield (R)-2,3-dihydroxy-isovalerate. In Vibrio atlanticus (strain LGP32) (Vibrio splendidus (strain Mel32)), this protein is Ketol-acid reductoisomerase (NADP(+)).